The sequence spans 326 residues: uncharacterized protein (326 aa).

Belongs to the ParB family.

This is an uncharacterized protein from Acidianus two-tailed virus (ATV).